The following is a 427-amino-acid chain: Ribosomal protein uS12 methylthiotransferase RimO (427 aa).

The MTTase N-terminal domain occupies 1-116 (MNFYVEVLGC…IATHIGKRNV (116 aa)). Residues Cys-10, Cys-46, Cys-79, Cys-145, Cys-149, and Cys-152 each coordinate [4Fe-4S] cluster. Positions 131 to 360 (VDNGQYAYVK…MDIQSQISFE (230 aa)) constitute a Radical SAM core domain. The 64-residue stretch at 363–426 (EKLVGKKLKV…IYDLEGEIVE (64 aa)) folds into the TRAM domain.

Belongs to the methylthiotransferase family. RimO subfamily. [4Fe-4S] cluster serves as cofactor.

Its subcellular location is the cytoplasm. It catalyses the reaction L-aspartate(89)-[ribosomal protein uS12]-hydrogen + (sulfur carrier)-SH + AH2 + 2 S-adenosyl-L-methionine = 3-methylsulfanyl-L-aspartate(89)-[ribosomal protein uS12]-hydrogen + (sulfur carrier)-H + 5'-deoxyadenosine + L-methionine + A + S-adenosyl-L-homocysteine + 2 H(+). Catalyzes the methylthiolation of an aspartic acid residue of ribosomal protein uS12. This chain is Ribosomal protein uS12 methylthiotransferase RimO, found in Thermosipho melanesiensis (strain DSM 12029 / CIP 104789 / BI429).